We begin with the raw amino-acid sequence, 640 residues long: Probable Ufm1-specific protease (640 aa).

Catalysis depends on residues Cys-467, Asp-591, and His-593.

It belongs to the peptidase C78 family.

Its function is as follows. Thiol protease which recognizes and hydrolyzes the peptide bond at the C-terminal Gly of ufm-1, a ubiquitin-like modifier protein bound to a number of target proteins. The protein is Probable Ufm1-specific protease of Oryza sativa subsp. japonica (Rice).